A 605-amino-acid polypeptide reads, in one-letter code: Putative zinc finger CCCH domain-containing protein 57 (605 aa).

3 disordered regions span residues 198–218 (RHTG…GREV), 238–261 (LLQD…DGEV), and 375–403 (QASH…YQQP). 2 stretches are compositionally biased toward basic and acidic residues: residues 201 to 218 (GHES…GREV) and 238 to 250 (LLQD…RADA). Over residues 389-403 (FPFQQQPQHDGYQQP) the composition is skewed to low complexity. 2 C3H1-type zinc fingers span residues 519 to 547 (EPKT…HSQD) and 557 to 585 (KYRT…QHRL).

This Oryza sativa subsp. japonica (Rice) protein is Putative zinc finger CCCH domain-containing protein 57.